We begin with the raw amino-acid sequence, 712 residues long: Polyribonucleotide nucleotidyltransferase (712 aa).

Residues Asp485 and Asp491 each contribute to the Mg(2+) site. Residues 552–615 (PRIHTIKINP…EAIRRIEAIT (64 aa)) enclose the KH domain. The S1 motif domain maps to 621 to 689 (NRIYEGKVVR…RQGRVRLSIK (69 aa)).

It belongs to the polyribonucleotide nucleotidyltransferase family. As to quaternary structure, component of the RNA degradosome, which is a multiprotein complex involved in RNA processing and mRNA degradation. The cofactor is Mg(2+).

It localises to the cytoplasm. The catalysed reaction is RNA(n+1) + phosphate = RNA(n) + a ribonucleoside 5'-diphosphate. Functionally, involved in mRNA degradation. Catalyzes the phosphorolysis of single-stranded polyribonucleotides processively in the 3'- to 5'-direction. In Aeromonas hydrophila subsp. hydrophila (strain ATCC 7966 / DSM 30187 / BCRC 13018 / CCUG 14551 / JCM 1027 / KCTC 2358 / NCIMB 9240 / NCTC 8049), this protein is Polyribonucleotide nucleotidyltransferase.